Here is a 622-residue protein sequence, read N- to C-terminus: Pesticidal crystal protein Cry2Ac (622 aa).

This sequence belongs to the delta endotoxin family.

Promotes colloidosmotic lysis by binding to the midgut epithelial cells of lepidopteran larvae. Has low activity on dipteran larvae. The chain is Pesticidal crystal protein Cry2Ac (cry2Ac) from Bacillus thuringiensis.